The sequence spans 885 residues: Eukaryotic translation initiation factor 3 subunit C (885 aa).

The disordered stretch occupies residues 1-81; it reads MSFFAKLQGS…SDSDDERQAV (81 aa). The segment covering 9–28 has biased composition (low complexity); that stretch reads GSDSESSSGSESEESILSGS. Residues 55–76 show a composition bias toward acidic residues; that stretch reads EESESEEESSDEDEEEMSDSDD. One can recognise a PCI domain in the interval 624 to 797; the sequence is FHMHLNVELL…GVVIFHRVEQ (174 aa). Residues 822–885 form a disordered region; the sequence is LDVKLGNQGQ…TTMGRRVTAQ (64 aa). Gly residues predominate over residues 855-872; that stretch reads RGTYRGRGGRGGRGGFNQ.

This sequence belongs to the eIF-3 subunit C family. As to quaternary structure, component of the eukaryotic translation initiation factor 3 (eIF-3) complex.

The protein resides in the cytoplasm. Its function is as follows. Component of the eukaryotic translation initiation factor 3 (eIF-3) complex, which is involved in protein synthesis of a specialized repertoire of mRNAs and, together with other initiation factors, stimulates binding of mRNA and methionyl-tRNAi to the 40S ribosome. The eIF-3 complex specifically targets and initiates translation of a subset of mRNAs involved in cell proliferation. This Cryptococcus neoformans var. neoformans serotype D (strain B-3501A) (Filobasidiella neoformans) protein is Eukaryotic translation initiation factor 3 subunit C.